A 672-amino-acid chain; its full sequence is MKQHFPLKDIQQEKRIYRGRIFFAVGLVIICLLVLASRYAYLQIFHYDEFSTASDKNRIRLQPLPPARGYIYDRNGVLLADNYPVFTATLSKADVENVDTVIEQLQPILELTQEDVDRFKSRIKTARKTERVAIKLNLTETNIAKFSEVKYKFPGVRIETQMTRYYPHGDLFAHVIGYVGRINDKELKSIDKDLYAGTNLIGKIGVEKSYEDLLHGTPGYESVEADAHSNILRHLGRKDPTRGNDLYLSLDYGLQVVASQQLAGRRGAIVAIDPRTGEILALVSSPSFNPNLFVTGINHKDYSSLRDNIDQPLYNRAVQGVYPPGSTIKPMEAMGGLHYGIVDWATAISDPGYFHLPGDSHKFRDWKKTGHGIVNMHKAIIMSCDTYFYILANQMGIDQMNQWMRQFGFGQKTGVDLPSESEGLYPNPEWKMRTRKSKWMKGETISVSIGQGAFTATPLQLAMATAITANHGSHVVPHVLRATHGAKPFTVRNAPDGKINFNGTDEDWVKMREAMIDVIQSGTGRGIRTPLYQIAGKTGTAQVKSIAQGKRYNEAALSERQLDHGLFVGFAPADKPEIAIAVIWENGRHGGSAAQLAKPVFDYWLLTRKKNPIRPANHQVNGGLMTAGIKPGELPSGNESASSTPATSAPTSAAASTPQATPTRPATNEVDE.

The helical transmembrane segment at 21-41 (IFFAVGLVIICLLVLASRYAY) threads the bilayer. The Acyl-ester intermediate role is filled by serine 326. The Zn(2+) site is built by aspartate 350, aspartate 365, histidine 371, and cysteine 384. A disordered region spans residues 616–672 (ANHQVNGGLMTAGIKPGELPSGNESASSTPATSAPTSAAASTPQATPTRPATNEVDE). The segment covering 640-672 (SASSTPATSAPTSAAASTPQATPTRPATNEVDE) has biased composition (low complexity).

This sequence belongs to the transpeptidase family. MrdA subfamily. Monomer. It depends on Zn(2+) as a cofactor.

The protein resides in the cell inner membrane. The enzyme catalyses Preferential cleavage: (Ac)2-L-Lys-D-Ala-|-D-Ala. Also transpeptidation of peptidyl-alanyl moieties that are N-acyl substituents of D-alanine.. The protein operates within cell wall biogenesis; peptidoglycan biosynthesis. Its activity is regulated as follows. Inhibited by the beta-lactams sulbactam and piperacillin-tazobactam. Functionally, catalyzes cross-linking of the peptidoglycan cell wall. Involved in the determination of the rod shape of the cell. In Acinetobacter baumannii (strain ATCC 19606 / DSM 30007 / JCM 6841 / CCUG 19606 / CIP 70.34 / NBRC 109757 / NCIMB 12457 / NCTC 12156 / 81), this protein is Peptidoglycan D,D-transpeptidase MrdA.